Consider the following 104-residue polypeptide: MDDTSRDPAITEDEIRALQFSAGDVAEIEQTILSFVDACHTRKVAMVVGSTINTLKDRDGKRWGNLPDIYCAYLIRCLVFRGELVGYGDLFRMRYSEIKRPVTL.

This is an uncharacterized protein from Escherichia coli (strain K12).